A 1398-amino-acid polypeptide reads, in one-letter code: DNA-directed RNA polymerase subunit beta' (1398 aa).

The Zn(2+) site is built by cysteine 71, cysteine 73, cysteine 86, and cysteine 89. The Mg(2+) site is built by aspartate 462, aspartate 464, and aspartate 466. 4 residues coordinate Zn(2+): cysteine 810, cysteine 883, cysteine 890, and cysteine 893. A disordered region spans residues glutamate 1377–glutamate 1398. The segment covering alanine 1380 to proline 1392 has biased composition (low complexity).

The protein belongs to the RNA polymerase beta' chain family. As to quaternary structure, the RNAP catalytic core consists of 2 alpha, 1 beta, 1 beta' and 1 omega subunit. When a sigma factor is associated with the core the holoenzyme is formed, which can initiate transcription. Requires Mg(2+) as cofactor. It depends on Zn(2+) as a cofactor.

It catalyses the reaction RNA(n) + a ribonucleoside 5'-triphosphate = RNA(n+1) + diphosphate. Its function is as follows. DNA-dependent RNA polymerase catalyzes the transcription of DNA into RNA using the four ribonucleoside triphosphates as substrates. The sequence is that of DNA-directed RNA polymerase subunit beta' from Bradyrhizobium diazoefficiens (strain JCM 10833 / BCRC 13528 / IAM 13628 / NBRC 14792 / USDA 110).